We begin with the raw amino-acid sequence, 572 residues long: Isocitrate lyase (572 aa).

104–106 (SGW) contributes to the substrate binding site. A Mg(2+)-binding site is contributed by aspartate 175. The active-site Proton acceptor is cysteine 213. Substrate contacts are provided by residues 214–215 (GH), arginine 250, 437–441 (NLSPS), and threonine 472. Residues 550–572 (QFKGSWTGPGSESSSHVLAKSRM) form a disordered region. Residues 570–572 (SRM) carry the Microbody targeting signal motif.

This sequence belongs to the isocitrate lyase/PEP mutase superfamily. Isocitrate lyase family. The cofactor is Mg(2+). Expressed in leaves.

The protein localises to the glyoxysome. It carries out the reaction D-threo-isocitrate = glyoxylate + succinate. The protein operates within carbohydrate metabolism; glyoxylate cycle; (S)-malate from isocitrate: step 1/2. Its function is as follows. Involved in storage lipid mobilization during the growth of higher plant seedling. The chain is Isocitrate lyase from Oryza sativa subsp. japonica (Rice).